A 634-amino-acid polypeptide reads, in one-letter code: Ras and EF-hand domain-containing protein homolog (634 aa).

2 consecutive EF-hand domains span residues 5 to 33 and 33 to 68; these read DVEN…CPQL and LDDN…TVQH. Residues Asp46, Asp48, Ser50, Lys52, and Glu57 each coordinate Ca(2+). Positions 169-310 form a coiled coil; sequence LSEKKHENER…RADFDQKQDE (142 aa). Disordered stretches follow at residues 216–237 and 308–328; these read ERER…EMSE and QDEL…SESV. GTP is bound by residues 449–454, 552–555, and 585–586; these read AVGKSS, NKVD, and AL. Positions 632-634 are cleaved as a propeptide — removed in mature form; it reads RGS.

It belongs to the small GTPase superfamily. Rab family. As to quaternary structure, homodimer.

It localises to the cytoplasm. The protein localises to the perinuclear region. Functionally, binds GTP and GDP. Plays a role in uterine seam cell development. The sequence is that of Ras and EF-hand domain-containing protein homolog from Caenorhabditis briggsae.